A 104-amino-acid polypeptide reads, in one-letter code: L-rhamnose mutarotase (104 aa).

Tyr-18 is a binding site for substrate. The active-site Proton donor is the His-22. Residues Tyr-41 and 76 to 77 contribute to the substrate site; that span reads WW.

It belongs to the rhamnose mutarotase family. In terms of assembly, homodimer.

Its subcellular location is the cytoplasm. It carries out the reaction alpha-L-rhamnose = beta-L-rhamnose. The protein operates within carbohydrate metabolism; L-rhamnose metabolism. In terms of biological role, involved in the anomeric conversion of L-rhamnose. In Rhizobium meliloti (strain 1021) (Ensifer meliloti), this protein is L-rhamnose mutarotase.